We begin with the raw amino-acid sequence, 230 residues long: LexA repressor (230 aa).

Positions 28-48 (IREIGEALDIRSTNGVNDHLK) form a DNA-binding region, H-T-H motif. Active-site for autocatalytic cleavage activity residues include Ser-148 and Lys-185.

This sequence belongs to the peptidase S24 family. As to quaternary structure, homodimer.

It catalyses the reaction Hydrolysis of Ala-|-Gly bond in repressor LexA.. Its function is as follows. Represses a number of genes involved in the response to DNA damage (SOS response), including recA and lexA. In the presence of single-stranded DNA, RecA interacts with LexA causing an autocatalytic cleavage which disrupts the DNA-binding part of LexA, leading to derepression of the SOS regulon and eventually DNA repair. This chain is LexA repressor, found in Anaeromyxobacter sp. (strain K).